A 468-amino-acid polypeptide reads, in one-letter code: ATP synthase subunit beta (468 aa).

Residue 155 to 162 coordinates ATP; sequence GGAGVGKT.

It belongs to the ATPase alpha/beta chains family. F-type ATPases have 2 components, CF(1) - the catalytic core - and CF(0) - the membrane proton channel. CF(1) has five subunits: alpha(3), beta(3), gamma(1), delta(1), epsilon(1). CF(0) has three main subunits: a(1), b(2) and c(9-12). The alpha and beta chains form an alternating ring which encloses part of the gamma chain. CF(1) is attached to CF(0) by a central stalk formed by the gamma and epsilon chains, while a peripheral stalk is formed by the delta and b chains.

The protein localises to the cell membrane. The enzyme catalyses ATP + H2O + 4 H(+)(in) = ADP + phosphate + 5 H(+)(out). Functionally, produces ATP from ADP in the presence of a proton gradient across the membrane. The catalytic sites are hosted primarily by the beta subunits. The polypeptide is ATP synthase subunit beta (Streptococcus sanguinis (strain SK36)).